Here is a 500-residue protein sequence, read N- to C-terminus: MDVFKQSEVWFVIGSQNLYGPKTLQQVMDNAHQVVNSLNNEAGLPVKLVLKPLVTTPDEITALCREANYDTACIGIMTWLHTFSPAKMWIGGLSILNKPLLQFHTQFNAQIPWKTMDMDFMNLNHTAHGGREFGFIGARMRQQHSVITGHWQDKEAHQRIGQWMRVAAAKQESQQLKVARFGDNMREVAVTEGDKVAAQIQFGYSVNAYGIGDLVAVVDAVSKGDIDTLVEEYEATYRFTDAVKLNGDKRENLLDAARIELGMTRFLEQGGFKAFTTNFENLYGLKQLPGLAVQRLMQQGYGFGGEGDWKTAALLRILKVMGTGLKGGTSFMEDYTYNFQPGNDLVVGSHMLEVCPSIAKEEKPLLDVQHLGIGGKADPARLIFSTPAGPALNASLIDMGNRFRLLVNVVDTVEQPHPLPKLPVARAIWQAQPSLATAAEAWIIAGGAHHTVFSQAVGVDELRLYAEMHGIEFLLIDNDTTLPAFKNEIRWNEVYYQLNR.

The Mn(2+) site is built by Glu-306, Glu-333, His-350, and His-450.

The protein belongs to the arabinose isomerase family. In terms of assembly, homohexamer. Mn(2+) serves as cofactor.

The enzyme catalyses beta-L-arabinopyranose = L-ribulose. It functions in the pathway carbohydrate degradation; L-arabinose degradation via L-ribulose; D-xylulose 5-phosphate from L-arabinose (bacterial route): step 1/3. In terms of biological role, catalyzes the conversion of L-arabinose to L-ribulose. The sequence is that of L-arabinose isomerase from Yersinia pestis bv. Antiqua (strain Nepal516).